The sequence spans 129 residues: Procyclic form-specific polypeptide A-beta (129 aa).

An N-terminal signal peptide occupies residues 1-27; the sequence is MAPRSLYLLAVLLFSANLFAGVGFAAA. The segment at 27-111 is disordered; the sequence is AAEGPEDKGL…PEPEPGAATL (85 aa). The span at 53–104 shows a compositional bias: acidic residues; sequence DDTNGTDPDPEPEPEPEPEPEPEPEPEPEPEPEPEPEPEPEPEPEPEPEPEP. Asparagine 56 is a glycosylation site (N-linked (GlcNAc...) asparagine). Tandem repeats lie at residues 59–60, 61–62, 63–64, 65–66, 67–68, 69–70, 71–72, 73–74, 75–76, 77–78, 79–80, 81–82, 83–84, 85–86, 87–88, 89–90, 91–92, 93–94, 95–96, 97–98, 99–100, 101–102, 103–104, and 105–106. Residues 59–106 are 24 X 2 AA tandem repeats of [DE]-P; sequence DPDPEPEPEPEPEPEPEPEPEPEPEPEPEPEPEPEPEPEPEPEPEPEP. Glycine 107 carries the GPI-anchor amidated glycine lipid modification. Residues 108-129 constitute a propeptide that is removed on maturation; the sequence is AATLKSVALPFAIAAVGLVAAF.

It is found in the cell membrane. Functionally, major surface antigen of procyclic forms. This is Procyclic form-specific polypeptide A-beta (PARPA-BETA) from Trypanosoma brucei brucei.